The sequence spans 232 residues: Probable fimbrial chaperone LpfB (232 aa).

Positions 1–24 (MDRMMKSKFVALALSLFLSQSVLA) are cleaved as a signal peptide.

It belongs to the periplasmic pilus chaperone family.

It is found in the periplasm. Its function is as follows. Part of the lpfABCC'DE fimbrial operon. LP fimbriae may participate in the interaction with eukaryotic cells by assisting in microcolony formation. The chain is Probable fimbrial chaperone LpfB (lpfB) from Escherichia coli O157:H7.